The primary structure comprises 209 residues: Chaperone protein TorD (209 aa).

Belongs to the TorD/DmsD family. TorD subfamily.

It localises to the cytoplasm. Functionally, involved in the biogenesis of TorA. Acts on TorA before the insertion of the molybdenum cofactor and, as a result, probably favors a conformation of the apoenzyme that is competent for acquiring the cofactor. The polypeptide is Chaperone protein TorD (Shewanella baltica (strain OS155 / ATCC BAA-1091)).